We begin with the raw amino-acid sequence, 195 residues long: Imidazoleglycerol-phosphate dehydratase (195 aa).

It belongs to the imidazoleglycerol-phosphate dehydratase family.

It localises to the cytoplasm. It carries out the reaction D-erythro-1-(imidazol-4-yl)glycerol 3-phosphate = 3-(imidazol-4-yl)-2-oxopropyl phosphate + H2O. The protein operates within amino-acid biosynthesis; L-histidine biosynthesis; L-histidine from 5-phospho-alpha-D-ribose 1-diphosphate: step 6/9. The sequence is that of Imidazoleglycerol-phosphate dehydratase from Citrifermentans bemidjiense (strain ATCC BAA-1014 / DSM 16622 / JCM 12645 / Bem) (Geobacter bemidjiensis).